Reading from the N-terminus, the 46-residue chain is Light-harvesting protein B-800/850 beta 2 chain (46 aa).

Residues 2-25 (AERSLSGLTEEEAVAVHAQFQTTF) lie on the Cytoplasmic side of the membrane. Positions 18 and 36 each coordinate a bacteriochlorophyll. A helical transmembrane segment spans residues 26 to 46 (SAFIVLAAVAHVLVWVWKPWF).

The protein belongs to the antenna complex beta subunit family. The core complex is formed by different alpha and beta chains, binding bacteriochlorophyll molecules, and arranged most probably in tetrameric structures disposed around the reaction center.

It is found in the cell inner membrane. Antenna complexes are light-harvesting systems, which transfer the excitation energy to the reaction centers. This Magnetospirillum molischianum (Rhodospirillum molischianum) protein is Light-harvesting protein B-800/850 beta 2 chain (B2).